A 305-amino-acid polypeptide reads, in one-letter code: Ribosomal RNA small subunit methyltransferase H (305 aa).

S-adenosyl-L-methionine contacts are provided by residues Gly47 to His49, Asp66, Phe93, Asp108, and Gln115. Residues Ala279–Glu305 form a disordered region. Basic residues predominate over residues Arg291–Glu305.

This sequence belongs to the methyltransferase superfamily. RsmH family.

Its subcellular location is the cytoplasm. The enzyme catalyses cytidine(1402) in 16S rRNA + S-adenosyl-L-methionine = N(4)-methylcytidine(1402) in 16S rRNA + S-adenosyl-L-homocysteine + H(+). In terms of biological role, specifically methylates the N4 position of cytidine in position 1402 (C1402) of 16S rRNA. This is Ribosomal RNA small subunit methyltransferase H from Prochlorococcus marinus (strain SARG / CCMP1375 / SS120).